The chain runs to 182 residues: Crossover junction endodeoxyribonuclease RuvC (182 aa).

Residues Asp-7, Glu-69, and Asp-141 contribute to the active site. 3 residues coordinate Mg(2+): Asp-7, Glu-69, and Asp-141.

This sequence belongs to the RuvC family. Homodimer which binds Holliday junction (HJ) DNA. The HJ becomes 2-fold symmetrical on binding to RuvC with unstacked arms; it has a different conformation from HJ DNA in complex with RuvA. In the full resolvosome a probable DNA-RuvA(4)-RuvB(12)-RuvC(2) complex forms which resolves the HJ. The cofactor is Mg(2+).

The protein resides in the cytoplasm. The enzyme catalyses Endonucleolytic cleavage at a junction such as a reciprocal single-stranded crossover between two homologous DNA duplexes (Holliday junction).. Functionally, the RuvA-RuvB-RuvC complex processes Holliday junction (HJ) DNA during genetic recombination and DNA repair. Endonuclease that resolves HJ intermediates. Cleaves cruciform DNA by making single-stranded nicks across the HJ at symmetrical positions within the homologous arms, yielding a 5'-phosphate and a 3'-hydroxyl group; requires a central core of homology in the junction. The consensus cleavage sequence is 5'-(A/T)TT(C/G)-3'. Cleavage occurs on the 3'-side of the TT dinucleotide at the point of strand exchange. HJ branch migration catalyzed by RuvA-RuvB allows RuvC to scan DNA until it finds its consensus sequence, where it cleaves and resolves the cruciform DNA. In Delftia acidovorans (strain DSM 14801 / SPH-1), this protein is Crossover junction endodeoxyribonuclease RuvC.